Here is a 651-residue protein sequence, read N- to C-terminus: Mitochondrial sodium/calcium exchanger protein (651 aa).

The chain crosses the membrane as a helical span at residues 51-71 (VILIILGILYLIILFVIMSSI). Residues 72–91 (ADDFFCPAISGIVSHLRMSE) lie on the Cytoplasmic side of the membrane. A helical transmembrane segment spans residues 92–112 (SIAGVTFLAFGNGAPDVFSSI). The Extracellular portion of the chain corresponds to 113–126 (SSVLTTPKPKADLA). A helical transmembrane segment spans residues 127–147 (LGDLFGTSIFVTTVVLAIIIF). At 148 to 161 (TKSFKVAIIPTLRD) the chain is on the cytoplasmic side. A helical membrane pass occupies residues 162 to 182 (LIFYMTTLAFIVFCFLKFDKI). Residue glutamate 183 is a topological domain, extracellular. Residues 184-204 (VWMPATFLGIYGVYVVTVIIL) form a helical membrane-spanning segment. Residues 205–398 (GIYRTHRKKR…PSRDEFSEMN (194 aa)) are Cytoplasmic-facing. A helical membrane pass occupies residues 399-419 (IFIKIVTVIKVVPVFFFKLTV). Residues 420 to 428 (PSNEMSWCK) lie on the Extracellular side of the membrane. Residues 429-449 (PLFILHCFASIQFALFSIQII) traverse the membrane as a helical segment. Topologically, residues 450-458 (TLKPFDGSP) are cytoplasmic. A helical membrane pass occupies residues 459–479 (GLWLYGLGFSAILAMVAMYFL). The Extracellular segment spans residues 480 to 486 (PLSKEQK). Residues 487–507 (YYKEIYSYLGFLMSIAWIYAT) form a helical membrane-spanning segment. Over 508–510 (SNE) the chain is Cytoplasmic. A helical transmembrane segment spans residues 511 to 531 (IVSVVTMIGVVTGLSMELLGL). Over 532–559 (TIMAWSNCIGDIVADIAVVKQGYPKMAM) the chain is Extracellular. Residues 560–580 (AAAIGGPLFNLLIGFGLPFTI) form a helical membrane-spanning segment. The Cytoplasmic segment spans residues 581 to 595 (AAAQGKEMELLINPV). The chain crosses the membrane as a helical span at residues 596–616 (YRLLMLFLGISLVTTFVALFI). At 617–626 (QRFTVRRPHA) the chain is on the extracellular side. The chain crosses the membrane as a helical span at residues 627 to 647 (VLLIFIFVVFLIFICLAEFHV). At 648 to 651 (LEWN) the chain is on the cytoplasmic side.

The protein belongs to the Ca(2+):cation antiporter (CaCA) (TC 2.A.19) family. SLC24A subfamily. Expressed in the seam cells of the organism. Expression is visible in the seam cells across all larval stages, and expression persists into the adult stage of the organism.

It localises to the mitochondrion inner membrane. Inhibited by the sodium/calcium exchanger inhibitor CGP-37157. In terms of biological role, mitochondrial sodium/calcium antiporter that mediates sodium-dependent calcium efflux from mitochondrion, thereby acting as a key regulator of mitochondrion calcium homeostasis. Required for patterning of neural circuits: functions in the same pathway as RAC-dependent effectors of the unc-6/netrin signaling pathway to set left/ right patterning of the VD/DD GABAergic circuit. The sequence is that of Mitochondrial sodium/calcium exchanger protein from Caenorhabditis elegans.